The sequence spans 682 residues: L-type lectin-domain containing receptor kinase VI.2 (682 aa).

Residues 1 to 26 (MGTQRSMFIVSFLFKLFLFLSVHVRA) form the signal peptide. Residues 27–310 (QRTTTNFAFR…AKKEGLNSQV (284 aa)) lie on the Extracellular side of the membrane. Residues 29–277 (TTTNFAFRGF…AHYVMGWSFS (249 aa)) form a legume-lectin like region. A helical membrane pass occupies residues 311-331 (IVMIVALSAVMLVMLVLLFFF). The Cytoplasmic segment spans residues 332 to 682 (VMYKKRLGQE…RVSSTSRISQ (351 aa)). Residues 367–641 (FKKTGIIGTG…LRYLNGEENV (275 aa)) form the Protein kinase domain. ATP is bound by residues 373–381 (IGTGGFGTV) and lysine 395. Aspartate 494 serves as the catalytic Proton acceptor.

It in the C-terminal section; belongs to the protein kinase superfamily. Ser/Thr protein kinase family. This sequence in the N-terminal section; belongs to the leguminous lectin family. As to expression, strongly expressed in the vascular system and trichomes of the leaves. Also expressed in guard cells, anthers, stigmas and germinating seeds, but not found in petals or roots. Increased susceptibility to the bacteria Pseudomonas syringae, characterized by stronger necrotic symptoms and higher bacterial proliferation.

The protein resides in the cell membrane. The enzyme catalyses L-seryl-[protein] + ATP = O-phospho-L-seryl-[protein] + ADP + H(+). The catalysed reaction is L-threonyl-[protein] + ATP = O-phospho-L-threonyl-[protein] + ADP + H(+). Involved in negative regulation of abscisic acid response in seed germination. Its function is as follows. Involved in resistance response to the pathogenic bacteria Pseudomonas syringae. The protein is L-type lectin-domain containing receptor kinase VI.2 of Arabidopsis thaliana (Mouse-ear cress).